We begin with the raw amino-acid sequence, 250 residues long: Triosephosphate isomerase (250 aa).

8-10 (NWK) serves as a coordination point for substrate. H93 acts as the Electrophile in catalysis. E165 acts as the Proton acceptor in catalysis. Substrate contacts are provided by G171 and S211.

This sequence belongs to the triosephosphate isomerase family. As to quaternary structure, homodimer.

Its subcellular location is the cytoplasm. It catalyses the reaction D-glyceraldehyde 3-phosphate = dihydroxyacetone phosphate. The protein operates within carbohydrate biosynthesis; gluconeogenesis. It participates in carbohydrate degradation; glycolysis; D-glyceraldehyde 3-phosphate from glycerone phosphate: step 1/1. Involved in the gluconeogenesis. Catalyzes stereospecifically the conversion of dihydroxyacetone phosphate (DHAP) to D-glyceraldehyde-3-phosphate (G3P). This Malacoplasma penetrans (strain HF-2) (Mycoplasma penetrans) protein is Triosephosphate isomerase.